Reading from the N-terminus, the 410-residue chain is Sprouty-related, EVH1 domain-containing protein 2 (410 aa).

A WH1 domain is found at 5 to 122 (THPDDDSYIV…RGVRKAIEDL (118 aa)). Residues 127-171 (TTSSSTIHNEAELGDDDVFTTATDSSSNSSQKREPNTRTISSPTS) form a disordered region. The span at 146 to 156 (TTATDSSSNSS) shows a compositional bias: polar residues. A KBD domain is found at 197–252 (SYPQVTFPEDDEEIVRINPREKIWMTGYEDYRHAPVRGKYLDSTEDADSYVRFAKG). 2 positions are modified to phosphotyrosine: tyrosine 224 and tyrosine 227. The tract at residues 274-294 (DPKGNVIKTQPPRAKSRRRKE) is disordered. Residues 300-408 (RCVYCRDMFN…CRCCGGKHKA (109 aa)) enclose the SPR domain.

Homodimer and heterodimer. Able to interact with SPRED1 to form heterodimers. Interacts with RAS. May interact with ZDHHC13 (via ANK repeats) and ZDHHC17 (via ANK repeats). Interacts with TESK1. Interacts with NF1. In terms of processing, phosphorylated on serine and threonine residues. Phosphorylated on tyrosine. Phosphorylation of Tyr-224 and Tyr-227 are required for ubiquitination. Post-translationally, ubiquitinated; leading to degradation by the proteasome. Expressed in the eye, with higher expression in lens epithelium than in lens fiber cells at postnatal day 15.

Its subcellular location is the cell membrane. It is found in the cytoplasmic vesicle. It localises to the secretory vesicle membrane. The protein localises to the cytoplasm. Negatively regulates Ras signaling pathways and downstream activation of MAP kinases. Recruits and translocates NF1 to the cell membrane, thereby enabling NF1-dependent hydrolysis of active GTP-bound Ras to inactive GDP-bound Ras. Inhibits fibroblast growth factor (FGF)-induced retinal lens fiber differentiation, probably by inhibiting FGF-mediated phosphorylation of ERK1/2. Inhibits TGFB-induced epithelial-to-mesenchymal transition in lens epithelial cells. The sequence is that of Sprouty-related, EVH1 domain-containing protein 2 (Spred2) from Rattus norvegicus (Rat).